The sequence spans 75 residues: MAKSTIFAIFMIVFVLGMVTKETKGQEMCRDLLMRAKNCDDSTCATLCKQKWKGNGSCFPNVYRKSCLCTFPCKT.

An N-terminal signal peptide occupies residues 1–25; the sequence is MAKSTIFAIFMIVFVLGMVTKETKG. Disulfide bonds link Cys-29-Cys-73, Cys-39-Cys-58, Cys-44-Cys-67, and Cys-48-Cys-69.

The protein belongs to the DEFL family.

Its subcellular location is the secreted. This is Putative defensin-like protein 119 (LCR53) from Arabidopsis thaliana (Mouse-ear cress).